Reading from the N-terminus, the 396-residue chain is MSEYSLFTSESVSEGHPDKIADQISDAVLDAIIAQDKHARVAVETLVKTGVAIVAGEVTTSAWVDLEQIVRDVICDIGYTSSDVGFDGATCGVMNIIGKQSPDINQGVDRAKPEDQGAGDQGLMFGYASNETEVLMPAPITFSHQLVQRQAEARKSGLLPWLRPDAKSQVTCRYEGGKVVGIDAVVLSTQHNPEVSYSDLREGVMELIVKHVLPAELLSKDTQFHINPTGQFIIGGPVGDCGLTGRKIIVDSYGGMARHGGGAFSGKDPSKVDRSAAYAGRYVAKNIVAAGLAERCEIQVSYAIGVAQPTSISLNTFGTGKISDDKIIKLVREVFDLRPYAITTMLDLLHPMYQETAAYGHFGRAPQTKTVGDDTFTTFTWEKTDRADTLRAAAGL.

H16 is a binding site for ATP. D18 serves as a coordination point for Mg(2+). E44 serves as a coordination point for K(+). Positions 57 and 100 each coordinate L-methionine. The flexible loop stretch occupies residues 100 to 110 (QSPDINQGVDR). ATP contacts are provided by residues 165-167 (DAK), D240, 246-247 (RK), A263, and K267. Residue D240 coordinates L-methionine. An L-methionine-binding site is contributed by K271.

Belongs to the AdoMet synthase family. As to quaternary structure, homotetramer; dimer of dimers. Mg(2+) serves as cofactor. K(+) is required as a cofactor.

Its subcellular location is the cytoplasm. The catalysed reaction is L-methionine + ATP + H2O = S-adenosyl-L-methionine + phosphate + diphosphate. It functions in the pathway amino-acid biosynthesis; S-adenosyl-L-methionine biosynthesis; S-adenosyl-L-methionine from L-methionine: step 1/1. Its function is as follows. Catalyzes the formation of S-adenosylmethionine (AdoMet) from methionine and ATP. The overall synthetic reaction is composed of two sequential steps, AdoMet formation and the subsequent tripolyphosphate hydrolysis which occurs prior to release of AdoMet from the enzyme. The sequence is that of S-adenosylmethionine synthase from Pseudomonas fluorescens (strain ATCC BAA-477 / NRRL B-23932 / Pf-5).